The chain runs to 155 residues: MKLQLVAVGTKMPDWVQTGYTEYLRRFPKDMPFELIEIPAGKRGKNADIKRILDKEGEQMLAAAGKNRIVTLNIPGKPWDTPQLANELERWKQDGRDVSLLIGGPEGLSPACKAAAEQSWSLSALTLPHPLVRVLVAESLYRAWSITTNHPYHRE.

S-adenosyl-L-methionine-binding positions include leucine 72, glycine 103, and 122–127 (LSALTL).

Belongs to the RNA methyltransferase RlmH family. In terms of assembly, homodimer.

The protein localises to the cytoplasm. It catalyses the reaction pseudouridine(1915) in 23S rRNA + S-adenosyl-L-methionine = N(3)-methylpseudouridine(1915) in 23S rRNA + S-adenosyl-L-homocysteine + H(+). Functionally, specifically methylates the pseudouridine at position 1915 (m3Psi1915) in 23S rRNA. The protein is Ribosomal RNA large subunit methyltransferase H of Salmonella choleraesuis (strain SC-B67).